The following is a 523-amino-acid chain: Type 2 DNA topoisomerase 6 subunit B (523 aa).

ATP contacts are provided by residues Asn-48, Asp-80, Ser-101 to Lys-102, Gly-110 to Ser-117, and Lys-436.

The protein belongs to the TOP6B family. As to quaternary structure, homodimer. Heterotetramer of two Top6A and two Top6B chains.

It catalyses the reaction ATP-dependent breakage, passage and rejoining of double-stranded DNA.. Relaxes both positive and negative superturns and exhibits a strong decatenase activity. This chain is Type 2 DNA topoisomerase 6 subunit B, found in Methanothermobacter thermautotrophicus (strain ATCC 29096 / DSM 1053 / JCM 10044 / NBRC 100330 / Delta H) (Methanobacterium thermoautotrophicum).